The following is a 409-amino-acid chain: Arginine deiminase (409 aa).

The active-site Amidino-cysteine intermediate is C399.

It belongs to the arginine deiminase family.

The protein resides in the cytoplasm. The enzyme catalyses L-arginine + H2O = L-citrulline + NH4(+). It participates in amino-acid degradation; L-arginine degradation via ADI pathway; carbamoyl phosphate from L-arginine: step 1/2. The sequence is that of Arginine deiminase from Borrelia recurrentis (strain A1).